A 295-amino-acid polypeptide reads, in one-letter code: Pyridoxal 5'-phosphate synthase subunit PdxS (295 aa).

Aspartate 25 is a D-ribose 5-phosphate binding site. Lysine 82 (schiff-base intermediate with D-ribose 5-phosphate) is an active-site residue. Glycine 154 provides a ligand contact to D-ribose 5-phosphate. Arginine 166 is a D-glyceraldehyde 3-phosphate binding site. Residues glycine 215 and 236-237 (GS) each bind D-ribose 5-phosphate.

Belongs to the PdxS/SNZ family. In the presence of PdxT, forms a dodecamer of heterodimers.

It catalyses the reaction aldehydo-D-ribose 5-phosphate + D-glyceraldehyde 3-phosphate + L-glutamine = pyridoxal 5'-phosphate + L-glutamate + phosphate + 3 H2O + H(+). It functions in the pathway cofactor biosynthesis; pyridoxal 5'-phosphate biosynthesis. In terms of biological role, catalyzes the formation of pyridoxal 5'-phosphate from ribose 5-phosphate (RBP), glyceraldehyde 3-phosphate (G3P) and ammonia. The ammonia is provided by the PdxT subunit. Can also use ribulose 5-phosphate and dihydroxyacetone phosphate as substrates, resulting from enzyme-catalyzed isomerization of RBP and G3P, respectively. The chain is Pyridoxal 5'-phosphate synthase subunit PdxS from Bacillus mycoides (strain KBAB4) (Bacillus weihenstephanensis).